We begin with the raw amino-acid sequence, 311 residues long: Probable cell division protein WhiA (311 aa).

Residues 274 to 307 (SLKELGSLLTPPLTKSGVNHRFRKLELIAEKIRN) constitute a DNA-binding region (H-T-H motif).

It belongs to the WhiA family.

Functionally, involved in cell division and chromosome segregation. The sequence is that of Probable cell division protein WhiA from Carboxydothermus hydrogenoformans (strain ATCC BAA-161 / DSM 6008 / Z-2901).